A 173-amino-acid chain; its full sequence is Ribosome maturation factor RimM (173 aa).

In terms of domain architecture, PRC barrel spans Glu98–Leu170.

The protein belongs to the RimM family. Binds ribosomal protein uS19.

It localises to the cytoplasm. In terms of biological role, an accessory protein needed during the final step in the assembly of 30S ribosomal subunit, possibly for assembly of the head region. Essential for efficient processing of 16S rRNA. May be needed both before and after RbfA during the maturation of 16S rRNA. It has affinity for free ribosomal 30S subunits but not for 70S ribosomes. This chain is Ribosome maturation factor RimM, found in Geobacter metallireducens (strain ATCC 53774 / DSM 7210 / GS-15).